The primary structure comprises 555 residues: 1,3-beta-glucanosyltransferase GAS2 (555 aa).

Residues 1 to 24 (MNKKQNFYAAIIVAIFLCLQLSHG) form the signal peptide. A disulfide bond links Cys-89 and Cys-118. Residues Tyr-107, 134–142 (SEPDISINR), Asn-175, Glu-176, Asp-217, and Arg-222 each bind (1,3-beta-D-glucosyl)n. Residue Glu-176 is the Proton donor of the active site. Intrachain disulfides connect Cys-231/Cys-367, Cys-247/Cys-278, Cys-390/Cys-442, Cys-392/Cys-489, Cys-399/Cys-466, and Cys-419/Cys-424. The active-site Nucleophile is Glu-275. Tyr-307 serves as a coordination point for (1,3-beta-D-glucosyl)n. N-linked (GlcNAc...) asparagine glycosylation is present at Asn-498. A lipid anchor (GPI-anchor amidated aspartate) is attached at Asp-531. Positions 532–555 (GTIAFKTSGFVILLISMIAAGILL) are cleaved as a propeptide — removed in mature form.

This sequence belongs to the glycosyl hydrolase 72 family. N-glycosylated.

It is found in the cell membrane. Splits internally a 1,3-beta-glucan molecule and transfers the newly generated reducing end (the donor) to the non-reducing end of another 1,3-beta-glucan molecule (the acceptor) forming a 1,3-beta linkage, resulting in the elongation of 1,3-beta-glucan chains in the cell wall. Involved in spore wall assembly. The protein is 1,3-beta-glucanosyltransferase GAS2 (GAS2) of Saccharomyces cerevisiae (strain ATCC 204508 / S288c) (Baker's yeast).